Consider the following 488-residue polypeptide: pH-response regulator protein palC (488 aa).

The BRO1 domain maps to 2-430; sequence PPYLYRLPTT…TVAFQPVPPV (429 aa). The segment at 449–488 is disordered; sequence PPPSKFSPSRIGHLNEEQGNDSPELGETEDTSYAGKGNYF.

The protein belongs to the palC family.

In terms of biological role, required for the proteolytic cleavage of the transcription factor RIM101 in response to alkaline ambient pH. The chain is pH-response regulator protein palC from Cryptococcus neoformans var. neoformans serotype D (strain B-3501A) (Filobasidiella neoformans).